The following is a 435-amino-acid chain: Trigger factor (435 aa).

A PPIase FKBP-type domain is found at 162–247 (GDRVIIDFKG…VKNVAEATLP (86 aa)).

Belongs to the FKBP-type PPIase family. Tig subfamily.

It localises to the cytoplasm. It carries out the reaction [protein]-peptidylproline (omega=180) = [protein]-peptidylproline (omega=0). Involved in protein export. Acts as a chaperone by maintaining the newly synthesized protein in an open conformation. Functions as a peptidyl-prolyl cis-trans isomerase. The chain is Trigger factor from Chromobacterium violaceum (strain ATCC 12472 / DSM 30191 / JCM 1249 / CCUG 213 / NBRC 12614 / NCIMB 9131 / NCTC 9757 / MK).